The following is a 310-amino-acid chain: Porphobilinogen deaminase (310 aa).

An S-(dipyrrolylmethanemethyl)cysteine modification is found at Cys-242.

This sequence belongs to the HMBS family. Monomer. The cofactor is dipyrromethane.

The catalysed reaction is 4 porphobilinogen + H2O = hydroxymethylbilane + 4 NH4(+). The protein operates within porphyrin-containing compound metabolism; protoporphyrin-IX biosynthesis; coproporphyrinogen-III from 5-aminolevulinate: step 2/4. Tetrapolymerization of the monopyrrole PBG into the hydroxymethylbilane pre-uroporphyrinogen in several discrete steps. The protein is Porphobilinogen deaminase of Shewanella baltica (strain OS195).